Reading from the N-terminus, the 652-residue chain is DNA ligase (652 aa).

Residues 29–33 (DSEYD), 78–79 (SL), and Glu107 each bind NAD(+). Lys109 functions as the N6-AMP-lysine intermediate in the catalytic mechanism. Positions 130, 164, 278, and 302 each coordinate NAD(+). Zn(2+)-binding residues include Cys395, Cys398, Cys413, and Cys418. The BRCT domain occupies 577 to 652 (DRQAELFGLT…IEDEDWLLNL (76 aa)).

It belongs to the NAD-dependent DNA ligase family. LigA subfamily. It depends on Mg(2+) as a cofactor. The cofactor is Mn(2+).

The catalysed reaction is NAD(+) + (deoxyribonucleotide)n-3'-hydroxyl + 5'-phospho-(deoxyribonucleotide)m = (deoxyribonucleotide)n+m + AMP + beta-nicotinamide D-nucleotide.. DNA ligase that catalyzes the formation of phosphodiester linkages between 5'-phosphoryl and 3'-hydroxyl groups in double-stranded DNA using NAD as a coenzyme and as the energy source for the reaction. It is essential for DNA replication and repair of damaged DNA. This is DNA ligase from Streptococcus equi subsp. zooepidemicus (strain MGCS10565).